A 274-amino-acid polypeptide reads, in one-letter code: 2,3,4,5-tetrahydropyridine-2,6-dicarboxylate N-succinyltransferase (274 aa).

Residues R106 and D143 each contribute to the substrate site.

Belongs to the transferase hexapeptide repeat family. In terms of assembly, homotrimer.

The protein localises to the cytoplasm. It catalyses the reaction (S)-2,3,4,5-tetrahydrodipicolinate + succinyl-CoA + H2O = (S)-2-succinylamino-6-oxoheptanedioate + CoA. It functions in the pathway amino-acid biosynthesis; L-lysine biosynthesis via DAP pathway; LL-2,6-diaminopimelate from (S)-tetrahydrodipicolinate (succinylase route): step 1/3. The polypeptide is 2,3,4,5-tetrahydropyridine-2,6-dicarboxylate N-succinyltransferase (Acidovorax ebreus (strain TPSY) (Diaphorobacter sp. (strain TPSY))).